The chain runs to 399 residues: Acetate kinase (399 aa).

Position 7 (Asn7) interacts with Mg(2+). Residue Lys14 participates in ATP binding. Position 91 (Arg91) interacts with substrate. Asp148 (proton donor/acceptor) is an active-site residue. Residues 208–212, 283–285, and 331–335 contribute to the ATP site; these read HIGNG, DMR, and GVGEN. A Mg(2+)-binding site is contributed by Glu385.

It belongs to the acetokinase family. In terms of assembly, homodimer. Mg(2+) is required as a cofactor. Mn(2+) serves as cofactor.

Its subcellular location is the cytoplasm. It catalyses the reaction acetate + ATP = acetyl phosphate + ADP. The protein operates within metabolic intermediate biosynthesis; acetyl-CoA biosynthesis; acetyl-CoA from acetate: step 1/2. Catalyzes the formation of acetyl phosphate from acetate and ATP. Can also catalyze the reverse reaction. The protein is Acetate kinase of Bacteroides thetaiotaomicron (strain ATCC 29148 / DSM 2079 / JCM 5827 / CCUG 10774 / NCTC 10582 / VPI-5482 / E50).